Consider the following 136-residue polypeptide: Mitochondrial pyruvate carrier 1-like protein (136 aa).

Over 2–19 (ARMAVLWRKMRDNFQSKE) the chain is Mitochondrial matrix. The helical transmembrane segment at 20–42 (FREYVSSTHFWGPAFSWGLPLAA) threads the bilayer. Residues 43–51 (FKDMKASPE) lie on the Mother cell cytoplasmic side of the membrane. The helical transmembrane segment at 52–74 (IISGRMTTALILYSAIFMRFAYR) threads the bilayer. Over 75–136 (VQPRNLLLMA…PGSQPPKQAS (62 aa)) the chain is Mitochondrial matrix. The disordered stretch occupies residues 111–136 (EAKARDPPATAAAATSPGSQPPKQAS). A compositionally biased stretch (low complexity) spans 117-136 (PPATAAAATSPGSQPPKQAS).

Belongs to the mitochondrial pyruvate carrier (MPC) (TC 2.A.105) family.

The protein localises to the mitochondrion inner membrane. The enzyme catalyses pyruvate(out) + H(+)(out) = pyruvate(in) + H(+)(in). Functionally, mediates the uptake of pyruvate into mitochondria. The polypeptide is Mitochondrial pyruvate carrier 1-like protein (MPC1L) (Homo sapiens (Human)).